The following is a 135-amino-acid chain: Endoribonuclease YbeY (135 aa).

Zn(2+) contacts are provided by His102, His106, and His112.

The protein belongs to the endoribonuclease YbeY family. Zn(2+) is required as a cofactor.

Its subcellular location is the cytoplasm. Single strand-specific metallo-endoribonuclease involved in late-stage 70S ribosome quality control and in maturation of the 3' terminus of the 16S rRNA. This is Endoribonuclease YbeY from Rubrobacter xylanophilus (strain DSM 9941 / JCM 11954 / NBRC 16129 / PRD-1).